We begin with the raw amino-acid sequence, 140 residues long: Peptidyl-prolyl cis-trans isomerase FKBP2 (140 aa).

Residues 1-22 (MRLSWILTILSICLSALAAATG) form the signal peptide. One can recognise a PPIase FKBP-type domain in the interval 47–135 (GDVLHMHYTG…VFEVELLKIE (89 aa)). The short motif at 137-140 (RSEL) is the Prevents secretion from ER element.

The protein belongs to the FKBP-type PPIase family. FKBP2 subfamily. As to quaternary structure, interacts with ARFGEF1/BIG1 and the C-terminal of EPB41L2.

The protein resides in the endoplasmic reticulum membrane. It catalyses the reaction [protein]-peptidylproline (omega=180) = [protein]-peptidylproline (omega=0). Inhibited by both FK506 and rapamycin. Functionally, PPIases accelerate the folding of proteins. It catalyzes the cis-trans isomerization of proline imidic peptide bonds in oligopeptides. The chain is Peptidyl-prolyl cis-trans isomerase FKBP2 (Fkbp2) from Mus musculus (Mouse).